A 186-amino-acid chain; its full sequence is Threonylcarbamoyl-AMP synthase (186 aa).

The region spanning 2 to 186 (PNEFELAVAA…ARTGAIIRPS (185 aa)) is the YrdC-like domain.

Belongs to the SUA5 family. TsaC subfamily.

The protein localises to the cytoplasm. The enzyme catalyses L-threonine + hydrogencarbonate + ATP = L-threonylcarbamoyladenylate + diphosphate + H2O. Required for the formation of a threonylcarbamoyl group on adenosine at position 37 (t(6)A37) in tRNAs that read codons beginning with adenine. Catalyzes the conversion of L-threonine, HCO(3)(-)/CO(2) and ATP to give threonylcarbamoyl-AMP (TC-AMP) as the acyladenylate intermediate, with the release of diphosphate. The polypeptide is Threonylcarbamoyl-AMP synthase (Aeromonas hydrophila subsp. hydrophila (strain ATCC 7966 / DSM 30187 / BCRC 13018 / CCUG 14551 / JCM 1027 / KCTC 2358 / NCIMB 9240 / NCTC 8049)).